We begin with the raw amino-acid sequence, 648 residues long: Forkhead box protein N1 (648 aa).

The disordered stretch occupies residues 1-105 (MVSLPPPQSD…SDKYPGFGFE (105 aa)). Positions 58 to 67 (ERTPSLPPHS) are enriched in pro residues. A DNA-binding region (fork-head) is located at residues 271–367 (KPIYSYSILI…EELQKWKRKD (97 aa)). 3 disordered regions span residues 392–445 (LGSP…LLMG), 458–508 (LSPG…LLAE), and 623–648 (LEPT…VALA). Residues 462 to 473 (LAPPGPPQPLFP) show a composition bias toward pro residues.

As to expression, expressed in thymus.

Its subcellular location is the nucleus. In terms of biological role, transcriptional regulator which regulates the development, differentiation, and function of thymic epithelial cells (TECs) both in the prenatal and postnatal thymus. Acts as a master regulator of the TECs lineage development and is required from the onset of differentiation in progenitor TECs in the developing fetus to the final differentiation steps through which TECs mature to acquire their full functionality. Regulates, either directly or indirectly the expression of a variety of genes that mediate diverse aspects of thymus development and function, including MHC Class II, DLL4, CCL25, CTSL, CD40 and PAX1. Regulates the differentiation of the immature TECs into functional cortical TECs (cTECs) and medullary TECs (mTECs). Essential for maintenance of mTECs population in the postnatal thymus. Involved in the morphogenesis and maintenance of the three-dimensional thymic microstructure which is necessary for a fully functional thymus. Plays an important role in the maintenance of hematopoiesis and particularly T lineage progenitors within the bone marrow niche with age. Essential for the vascularization of the thymus anlage. Promotes the terminal differentiation of epithelial cells in the epidermis and hair follicles, partly by negatively regulating the activity of protein kinase C. Plays a crucial role in the early prenatal stages of T-cell ontogeny. This is Forkhead box protein N1 (FOXN1) from Homo sapiens (Human).